A 374-amino-acid chain; its full sequence is Protein A6 homolog (374 aa).

It belongs to the chordopoxvirinae A6 family.

The protein localises to the virion. In terms of biological role, plays an essential role in immature virion (IV) to mature virion (MV) transition. The protein is Protein A6 homolog of Vertebrata (FPV).